Consider the following 260-residue polypeptide: O-antigen export system permease protein RfbA (260 aa).

7 helical membrane-spanning segments follow: residues 31–51 (FLGFLWTFLNPTLHMLVYVLL), 63–83 (FPFFMFVGLLPWIWFSTSVGG), 109–129 (VVVTNLCNFVLSLPLMLVLGM), 139–159 (VVLFPVVVLIQLTFTLALTYI), 173–193 (IVSNLLTLWFFATPVLYPLST), 201–221 (SLMLALNPMVSLMTSYQAIFY), and 229–249 (EPLMALAAVSVVLLWAASSIF). The ABC transmembrane type-2 domain maps to 32–252 (LGFLWTFLNP…WAASSIFESR (221 aa)).

Belongs to the ABC-2 integral membrane protein family.

It localises to the cell inner membrane. Its function is as follows. May form an ATP-driven O-antigen export apparatus, in association with RfbB. This chain is O-antigen export system permease protein RfbA (rfbA), found in Myxococcus xanthus.